Here is a 144-residue protein sequence, read N- to C-terminus: Glycine-rich protein HC1 (144 aa).

The helical transmembrane segment at 5–25 (IFLLLGLSIAFAILISSEVAA) threads the bilayer. 11 repeat units span residues 37–42 (GYNNGG), 43–48 (GYHNGG), 50–55 (GYNNGG), 56–61 (GYHNGG), 63–68 (GYNNGG), 69–74 (GYHNGG), 76–81 (GYNNGG), 82–87 (GYHNGG), 89–94 (GYNNGG), 102–107 (GYNNGG), and 108–113 (GYHGGG). Residues 37–113 (GYNNGGGYHN…NNGGGYHGGG (77 aa)) form an 11 X 6 AA tandem repeats of G-Y-[NH]-N-G -G region.

It belongs to the GRP family.

It is found in the membrane. The polypeptide is Glycine-rich protein HC1 (Oxybasis rubra (Red goosefoot)).